The following is a 507-amino-acid chain: ATP synthase subunit alpha, chloroplastic (507 aa).

170–177 (GDRQTGKT) is an ATP binding site.

Belongs to the ATPase alpha/beta chains family. In terms of assembly, F-type ATPases have 2 components, CF(1) - the catalytic core - and CF(0) - the membrane proton channel. CF(1) has five subunits: alpha(3), beta(3), gamma(1), delta(1), epsilon(1). CF(0) has four main subunits: a, b, b' and c.

The protein resides in the plastid. The protein localises to the chloroplast thylakoid membrane. The catalysed reaction is ATP + H2O + 4 H(+)(in) = ADP + phosphate + 5 H(+)(out). Its function is as follows. Produces ATP from ADP in the presence of a proton gradient across the membrane. The alpha chain is a regulatory subunit. The sequence is that of ATP synthase subunit alpha, chloroplastic from Amborella trichopoda.